The following is a 188-amino-acid chain: Cytochrome c-type protein NrfB (188 aa).

Positions 1–32 (MSVLRSLLTAGVLASGLLWSLNGITATPAAQA) are cleaved as a signal peptide. The heme site is built by Cys49, Cys52, His53, Cys78, Cys81, His82, Cys113, Cys116, His117, Cys138, Cys141, His142, Cys163, Cys166, and His167.

Post-translationally, binds 5 heme groups per subunit.

It is found in the periplasm. Its pathway is energy metabolism; nitrogen metabolism. Functionally, plays a role in nitrite reduction. This chain is Cytochrome c-type protein NrfB (nrfB), found in Escherichia coli O6:H1 (strain CFT073 / ATCC 700928 / UPEC).